Reading from the N-terminus, the 230-residue chain is Probable methylthioribulose-1-phosphate dehydratase (230 aa).

A substrate-binding site is contributed by cysteine 87. Positions 105 and 107 each coordinate Zn(2+). Glutamate 129 functions as the Proton donor/acceptor in the catalytic mechanism. Histidine 185 serves as a coordination point for Zn(2+).

It belongs to the aldolase class II family. MtnB subfamily. It depends on Zn(2+) as a cofactor.

Its subcellular location is the cytoplasm. It catalyses the reaction 5-(methylsulfanyl)-D-ribulose 1-phosphate = 5-methylsulfanyl-2,3-dioxopentyl phosphate + H2O. It functions in the pathway amino-acid biosynthesis; L-methionine biosynthesis via salvage pathway; L-methionine from S-methyl-5-thio-alpha-D-ribose 1-phosphate: step 2/6. Catalyzes the dehydration of methylthioribulose-1-phosphate (MTRu-1-P) into 2,3-diketo-5-methylthiopentyl-1-phosphate (DK-MTP-1-P). This chain is Probable methylthioribulose-1-phosphate dehydratase, found in Drosophila pseudoobscura pseudoobscura (Fruit fly).